Reading from the N-terminus, the 1502-residue chain is Nucleoporin NUP170 (1502 aa).

Residues 1-31 form a disordered region; it reads MFQSFFHNNGPAAAGETFSDSRSYPLTNHQE. Positions 18–30 are enriched in polar residues; the sequence is FSDSRSYPLTNHQ. Residues 233–261 are leucine-zipper; it reads LISTTMELFMFAISLDKATNELSVFNTHL. Phosphoserine is present on S1247.

Belongs to the non-repetitive/WGA-negative nucleoporin family. In terms of assembly, component of the nuclear pore complex (NPC). NPC constitutes the exclusive means of nucleocytoplasmic transport. NPCs allow the passive diffusion of ions and small molecules and the active, nuclear transport receptor-mediated bidirectional transport of macromolecules such as proteins, RNAs, ribonucleoparticles (RNPs), and ribosomal subunits across the nuclear envelope. Due to its 8-fold rotational symmetry, all subunits are present with 8 copies or multiples thereof. During mitosis NUP53 changes its binding partner within the NPC from NUP170 to NIC96, exposing a high affinity binding site for the karyopherin PSE1, and retaining it in the NPC.

Its subcellular location is the nucleus. The protein localises to the nuclear pore complex. It localises to the nucleus membrane. Its function is as follows. Functions as a component of the nuclear pore complex (NPC). NPC components, collectively referred to as nucleoporins (NUPs), can play the role of both NPC structural components and of docking or interaction partners for transiently associated nuclear transport factors. NUP170 probably plays an important role in NPC assembly and organization. In addition it is required for chromosome transmission fidelity. This chain is Nucleoporin NUP170 (NUP170), found in Saccharomyces cerevisiae (strain ATCC 204508 / S288c) (Baker's yeast).